The following is a 234-amino-acid chain: Fibrillarin-like rRNA/tRNA 2'-O-methyltransferase (234 aa).

S-adenosyl-L-methionine is bound by residues T91–T92, E110–F111, D137–A138, and D157–Q160.

Belongs to the methyltransferase superfamily. Fibrillarin family. In terms of assembly, interacts with nop5. Component of box C/D small ribonucleoprotein (sRNP) particles that contain rpl7ae, FlpA and nop5, plus a guide RNA.

In terms of biological role, involved in pre-rRNA and tRNA processing. Utilizes the methyl donor S-adenosyl-L-methionine to catalyze the site-specific 2'-hydroxyl methylation of ribose moieties in rRNA and tRNA. Site specificity is provided by a guide RNA that base pairs with the substrate. Methylation occurs at a characteristic distance from the sequence involved in base pairing with the guide RNA. This is Fibrillarin-like rRNA/tRNA 2'-O-methyltransferase from Pyrobaculum calidifontis (strain DSM 21063 / JCM 11548 / VA1).